Reading from the N-terminus, the 413-residue chain is Palmitoyl-acyl carrier protein thioesterase, chloroplastic (413 aa).

The transit peptide at 1–57 directs the protein to the chloroplast; sequence MVATAVTSAFFPVTSSPDSSDSKNKKLGSIKSKPSVSSGSLQVKANAQAPPKINGTV. Positions 12-79 are disordered; it reads PVTSSPDSSD…DGASSPPPRT (68 aa). Over residues 29–40 the composition is skewed to low complexity; it reads SIKSKPSVSSGS. Residues asparagine 310, histidine 312, and cysteine 347 contribute to the active site. A disordered region spans residues 394 to 413; that stretch reads WRPKHAKSSANMDQITAKRA.

The protein belongs to the acyl-ACP thioesterase family.

It is found in the plastid. The protein resides in the chloroplast. The enzyme catalyses hexadecanoyl-[ACP] + H2O = hexadecanoate + holo-[ACP] + H(+). Plays an essential role in chain termination during de novo fatty acid synthesis. High thioesterase activity for palmitoyl-ACP versus other acyl-ACPs. The chain is Palmitoyl-acyl carrier protein thioesterase, chloroplastic (FATB1) from Gossypium hirsutum (Upland cotton).